The chain runs to 80 residues: MNAKAFLAIFMIALLITDRAEAGWWNAFKSIGKKLLKSKLAKDITKMAKQRAKEYVVKKLNGPPEEEVAAIDALMNSLDY.

An N-terminal signal peptide occupies residues 1–22 (MNAKAFLAIFMIALLITDRAEA).

It belongs to the non-disulfide-bridged peptide (NDBP) superfamily. Long chain multifunctional peptide (group 2) family. As to expression, expressed by the venom gland.

The protein localises to the secreted. The protein is Venom protein HGE029 of Hoffmannihadrurus gertschi (Scorpion).